The primary structure comprises 766 residues: FRSTAAGRCLPVTCCVFPRHFRVSSSSILPSNAKVVGGCKKNRQIAVEAAQSLEVDSQQPMNQEEVSEKMRQLREKIRWMLQNMDDGEISVSPYDTAWVAMVEDIGGGGGPQFPTSLEWISNNQLDDGSWGDLRFLIYDRILNTLACVAVLTQWKMHLHKCQKGLRFIRENIDNLENGNDEMMPVGFEVAFPSLIQTAKKVGIKIPTDSPFMKNIYAKRDLKLRKIPMDILHTKPTTLLHSLEGMEGLDWEKLLNLRTDDGSFLMSPSSTAYVFRHTKDELCHQYLLKSVNKFNGGVPNVYPVDMFEHLWCVDRLQRLGISRYFQVEIQECLDYVYKYWTNKGICWARNTNVQDVDDTAMGFRLLRLHGYDVSTDAFKQFEKAGEFCSFPGQSTDALTGMYNLYRASQTMFNGEHILADAKEYSTNFLHKKRLANAIVDKWIITKDLPGEVGYALDVPFYASLPRLEARFFLEQYGGDDDVWIGKTLYRMLYVNCDTHLELAKLDYEKCQAVHQLEWESIQKWYRDWNLVEFGLSERSLLLAYYIAASTVFEPERSRERLAWAITAILVKTIASQRQLPLETKGESLGSILENEDGGRLIEFLINTIHQLSSEIVVAEGRDITQQLSNTWQKWLKTCKEGGDDDLGEAEARLIVHTLHLSSGLDESSFSHPKYHQLLEATSKVCGQLRLFQSRKQVDVDLATGTTFQIEAGMQELVKLVFTNSSEDLDSLTKQSFFSIARSFYYTAYCDEGAINSHIDKVLFEKID.

The transit peptide at 1–30 (FRSTAAGRCLPVTCCVFPRHFRVSSSSILP) directs the protein to the chloroplast. Lys222 contacts substrate. Residues Asp354 and Asp356 each contribute to the Mg(2+) site. Residues 354–357 (DVDD) carry the DXDD motif motif. Lys440 is a binding site for substrate.

This sequence belongs to the terpene synthase family. Tpsc subfamily. It depends on Mg(2+) as a cofactor. As to expression, accumulates in leaves, and, at low levels, in germinating seeds.

The protein resides in the plastid. It localises to the chloroplast. It carries out the reaction (2E,6E,10E)-geranylgeranyl diphosphate = ent-copalyl diphosphate. It participates in plant hormone biosynthesis; gibberellin biosynthesis. It functions in the pathway secondary metabolite biosynthesis; terpenoid biosynthesis. Its function is as follows. Involved in the biosynthesis of ent-kaurene diterpenoids natural products such as oridonin, miltiradiene, eriocalyxin B and nezukol, known to exhibit antitumor, anti-inflammatory and antibacterial activities, and in the production of gibberellins phytohormones. Catalyzes the conversion of (2E,6E,10E)-geranylgeranyl diphosphate (GGPP) to ent-copalyl diphosphate (ent-CPP). The chain is Ent-copalyl diphosphate synthase 3 from Isodon eriocalyx (Plectranthus eriocalyx).